A 305-amino-acid polypeptide reads, in one-letter code: Homoserine O-acetyltransferase (305 aa).

Catalysis depends on Cys-142, which acts as the Acyl-thioester intermediate. Substrate contacts are provided by Lys-163 and Ser-192. The active-site Proton acceptor is His-235. The active site involves Glu-237. Residue Arg-249 participates in substrate binding.

This sequence belongs to the MetA family.

It localises to the cytoplasm. It catalyses the reaction L-homoserine + acetyl-CoA = O-acetyl-L-homoserine + CoA. The protein operates within amino-acid biosynthesis; L-methionine biosynthesis via de novo pathway; O-acetyl-L-homoserine from L-homoserine: step 1/1. Transfers an acetyl group from acetyl-CoA to L-homoserine, forming acetyl-L-homoserine. This chain is Homoserine O-acetyltransferase, found in Hyphomonas neptunium (strain ATCC 15444).